The primary structure comprises 202 residues: Adenylyl-sulfate kinase (202 aa).

An ATP-binding site is contributed by 31–38; the sequence is GLSASGKS. Catalysis depends on S105, which acts as the Phosphoserine intermediate.

The protein belongs to the APS kinase family.

It catalyses the reaction adenosine 5'-phosphosulfate + ATP = 3'-phosphoadenylyl sulfate + ADP + H(+). Its pathway is sulfur metabolism; hydrogen sulfide biosynthesis; sulfite from sulfate: step 2/3. In terms of biological role, catalyzes the synthesis of activated sulfate. This Saccharomyces cerevisiae (strain ATCC 204508 / S288c) (Baker's yeast) protein is Adenylyl-sulfate kinase (MET14).